Here is a 1273-residue protein sequence, read N- to C-terminus: DNA polymerase 037L (1273 aa).

A coiled-coil region spans residues 679 to 837 (IRKNAITEEL…ENKSKEDIDE (159 aa)).

This sequence belongs to the DNA polymerase type-B family.

It carries out the reaction DNA(n) + a 2'-deoxyribonucleoside 5'-triphosphate = DNA(n+1) + diphosphate. Its function is as follows. DNA-directed DNA polymerase involved in viral DNA replication. The protein is DNA polymerase 037L (DPOL) of Invertebrate iridescent virus 6 (IIV-6).